Reading from the N-terminus, the 341-residue chain is MDYRQAGVDVEAGREFVSRIRQQVESTFRPEVMGGIGGFAGLFEIPAGYKAPVLVSGTDGVGTKLKIAQAMDQHHTIGIDLVAMCVNDILTTGAEPLYFLDYLATGKLEPAQLADVVTGIVEGCKQSGCALLGGETAEMPGFYGAGEYDAAGFAVGIVEKSQLLNGSQVNIGDVAIAVESSGVHSNGFSLVRKIIESNGWQWSDCLPEWGGQSLGEIFLEPTRIYVKPIQALLKSGINIHGMAHITGGGLPENLPRCLGQGQSIQVKAGSWQPLPVFNWLADKGQVNSTAMLETFNLGVGFVVLVSPEQRQTTLDFFSGQGLVANQIGTVIEGDGAFVWLD.

This sequence belongs to the AIR synthase family.

It localises to the cytoplasm. The catalysed reaction is 2-formamido-N(1)-(5-O-phospho-beta-D-ribosyl)acetamidine + ATP = 5-amino-1-(5-phospho-beta-D-ribosyl)imidazole + ADP + phosphate + H(+). It participates in purine metabolism; IMP biosynthesis via de novo pathway; 5-amino-1-(5-phospho-D-ribosyl)imidazole from N(2)-formyl-N(1)-(5-phospho-D-ribosyl)glycinamide: step 2/2. The chain is Phosphoribosylformylglycinamidine cyclo-ligase from Synechocystis sp. (strain ATCC 27184 / PCC 6803 / Kazusa).